The following is a 346-amino-acid chain: Alkanal monooxygenase alpha chain (346 aa).

In terms of assembly, heterodimer of an alpha and a beta chain.

It catalyses the reaction a long-chain fatty aldehyde + FMNH2 + O2 = a long-chain fatty acid + hnu + FMN + H2O + 2 H(+). Functionally, light-emitting reaction in luminous bacteria. This is Alkanal monooxygenase alpha chain (luxA) from Photobacterium phosphoreum.